We begin with the raw amino-acid sequence, 235 residues long: Ubiquinone/menaquinone biosynthesis C-methyltransferase UbiE (235 aa).

3 residues coordinate S-adenosyl-L-methionine: Thr60, Asp81, and Ser126.

Belongs to the class I-like SAM-binding methyltransferase superfamily. MenG/UbiE family.

The catalysed reaction is a 2-demethylmenaquinol + S-adenosyl-L-methionine = a menaquinol + S-adenosyl-L-homocysteine + H(+). It carries out the reaction a 2-methoxy-6-(all-trans-polyprenyl)benzene-1,4-diol + S-adenosyl-L-methionine = a 5-methoxy-2-methyl-3-(all-trans-polyprenyl)benzene-1,4-diol + S-adenosyl-L-homocysteine + H(+). Its pathway is quinol/quinone metabolism; menaquinone biosynthesis; menaquinol from 1,4-dihydroxy-2-naphthoate: step 2/2. It participates in cofactor biosynthesis; ubiquinone biosynthesis. Functionally, methyltransferase required for the conversion of demethylmenaquinol (DMKH2) to menaquinol (MKH2) and the conversion of 2-polyprenyl-6-methoxy-1,4-benzoquinol (DDMQH2) to 2-polyprenyl-3-methyl-6-methoxy-1,4-benzoquinol (DMQH2). This chain is Ubiquinone/menaquinone biosynthesis C-methyltransferase UbiE, found in Geobacter sp. (strain M21).